Here is a 417-residue protein sequence, read N- to C-terminus: D-galactonate dehydratase family member RspA (417 aa).

Substrate-binding residues include Q43 and H127. Catalysis depends on Y158, which acts as the Proton donor/acceptor. Mg(2+) is bound at residue D223. The active-site Proton donor/acceptor is H225. Mg(2+) is bound by residues E249 and E275. Residues E275, R296, H325, D329, and E352 each coordinate substrate.

The protein belongs to the mandelate racemase/muconate lactonizing enzyme family. GalD subfamily. It depends on Mg(2+) as a cofactor.

It carries out the reaction D-gluconate = 2-dehydro-3-deoxy-D-gluconate + H2O. In terms of biological role, has low D-gluconate dehydratase activity (in vitro), suggesting that it has no significant role in D-gluconate degradation in vivo. Has no detectable activity with a panel of 70 other acid sugars (in vitro). This chain is D-galactonate dehydratase family member RspA (rspA), found in Pantoea ananatis (strain LMG 20103).